The sequence spans 378 residues: Probable dihydroorotase-like protein (378 aa).

It belongs to the metallo-dependent hydrolases superfamily. DHOase family. PyrC' subfamily.

Non-functional DHOase. The protein is Probable dihydroorotase-like protein (pyrC') of Helicobacter pylori (strain ATCC 700392 / 26695) (Campylobacter pylori).